Reading from the N-terminus, the 783-residue chain is Metabotropic glutamate receptor-like protein J (783 aa).

The N-terminal stretch at 1–20 (MKILLYIAIILSFFSLITIS) is a signal peptide. At 21–383 (SECKIAVLLS…DYPNSLKYGV (363 aa)) the chain is on the extracellular side. Positions 56–85 (DFSIYYENLEESMEEAEKAFQDALHKGANL) form a coiled coil. N-linked (GlcNAc...) asparagine glycosylation is found at asparagine 181, asparagine 196, asparagine 256, asparagine 282, and asparagine 315. The chain crosses the membrane as a helical span at residues 384-404 (TIVSGVCIFICLVCMTLVVVF). At 405-415 (KKARVIKSSSP) the chain is on the cytoplasmic side. A helical membrane pass occupies residues 416-436 (AFLLLILLGCCIIFAACILFA). Over 437 to 443 (QSPTNQT) the chain is Extracellular. The N-linked (GlcNAc...) asparagine glycan is linked to asparagine 441. Residues 444-464 (CSARIWLLSLGYTLFLGNLLV) form a helical membrane-spanning segment. Topologically, residues 465 to 489 (KNWRIWLLFDNPKLKKRAITNWKLY) are cytoplasmic. The helical transmembrane segment at 490–510 (PWVFAILAIDVMILAIWQGLG) threads the bilayer. Over 511–538 (NINAESRIGYDSLTQYQYKNVCSSDDQG) the chain is Extracellular. A helical transmembrane segment spans residues 539–559 (SIALYLLLVFHGLVLLVACFI). Topologically, residues 560–575 (SFKIKVVDIEEFNESK) are cytoplasmic. The chain crosses the membrane as a helical span at residues 576–596 (PITTSVYIITFCLFIVIPLMV). Topologically, residues 597-604 (SPQSLTSQ) are extracellular. A helical membrane pass occupies residues 605–625 (TTIICVCAIVTTLISMLLLFG). Residues 626–783 (SKFYKMATQG…GETEIDSNNV (158 aa)) are Cytoplasmic-facing. The span at 647 to 656 (KSSSKSSKSS) shows a compositional bias: low complexity. Disordered regions lie at residues 647–696 (KSSS…FSNK) and 731–783 (QLQQ…SNNV). Residues 670-679 (GEDDTSDETS) are compositionally biased toward acidic residues. The span at 763-783 (VLSKRISNQQNGETEIDSNNV) shows a compositional bias: polar residues.

This sequence in the N-terminal section; belongs to the BMP lipoprotein family. It in the C-terminal section; belongs to the G-protein coupled receptor 3 family. GABA-B receptor subfamily.

It is found in the cell membrane. The protein localises to the membrane. It localises to the endoplasmic reticulum membrane. The protein resides in the golgi apparatus membrane. Its subcellular location is the nucleus envelope. In terms of biological role, may act during the development and be a negative regulator. The polypeptide is Metabotropic glutamate receptor-like protein J (grlJ) (Dictyostelium discoideum (Social amoeba)).